A 719-amino-acid polypeptide reads, in one-letter code: Fatty acid oxidation complex subunit alpha (719 aa).

An enoyl-CoA hydratase/isomerase region spans residues M1–A190. Substrate is bound at residue D298. The interval H313–A719 is 3-hydroxyacyl-CoA dehydrogenase. NAD(+) contacts are provided by residues M326, D345, V402–E404, K409, and S431. Catalysis depends on H452, which acts as the For 3-hydroxyacyl-CoA dehydrogenase activity. N455 lines the NAD(+) pocket. N502 serves as a coordination point for substrate.

It in the N-terminal section; belongs to the enoyl-CoA hydratase/isomerase family. This sequence in the C-terminal section; belongs to the 3-hydroxyacyl-CoA dehydrogenase family. As to quaternary structure, heterotetramer of two alpha chains (FadB) and two beta chains (FadA).

The catalysed reaction is a (3S)-3-hydroxyacyl-CoA + NAD(+) = a 3-oxoacyl-CoA + NADH + H(+). It catalyses the reaction a (3S)-3-hydroxyacyl-CoA = a (2E)-enoyl-CoA + H2O. It carries out the reaction a 4-saturated-(3S)-3-hydroxyacyl-CoA = a (3E)-enoyl-CoA + H2O. The enzyme catalyses (3S)-3-hydroxybutanoyl-CoA = (3R)-3-hydroxybutanoyl-CoA. The catalysed reaction is a (3Z)-enoyl-CoA = a 4-saturated (2E)-enoyl-CoA. It catalyses the reaction a (3E)-enoyl-CoA = a 4-saturated (2E)-enoyl-CoA. The protein operates within lipid metabolism; fatty acid beta-oxidation. Involved in the aerobic and anaerobic degradation of long-chain fatty acids via beta-oxidation cycle. Catalyzes the formation of 3-oxoacyl-CoA from enoyl-CoA via L-3-hydroxyacyl-CoA. It can also use D-3-hydroxyacyl-CoA and cis-3-enoyl-CoA as substrate. The polypeptide is Fatty acid oxidation complex subunit alpha (Psychrobacter sp. (strain PRwf-1)).